The sequence spans 458 residues: MASPALAAALAAAAAEGPNGSDAGEWGSGGGANASGTDWVPPPGQYSAGAVAGLAAVVGFLIVFTVVGNVLVVIAVLTSRALRAPQNLFLVSLASADILVATLVMPFSLANELMAYWYFGQVWCGVYLALDVLFCTSSIVHLCAISLDRYWSVTQAVEYNLKRTPRRVKATIVAVWLISAVISFPPLVSFYRRPDGAAYPQCGLNDETWYILSSCIGSFFAPCLIMGLVYARIYRVAKLRTRTLSEKRGPAGPDGASPTTENGLGKAAGENGHCAPPRTEVEPDESSAAERRRRRGALRRGGRRREGAEGDTGSADGPGPGLAAEQGARTASRSPGPGGRLSRASSRSVEFFLSRRRRARSSVCRRKVAQAREKRFTFVLAVVMGVFVLCWFPFFFSYSLYGICREACQLPEPLFKFFFWIGYCNSSLNPVIYTVFNQDFRRSFKHILFRRRRRGFRQ.

The Extracellular segment spans residues 1–51 (MASPALAAALAAAAAEGPNGSDAGEWGSGGGANASGTDWVPPPGQYSAGAV). N-linked (GlcNAc...) asparagine glycans are attached at residues Asn-19 and Asn-33. Residues 52–76 (AGLAAVVGFLIVFTVVGNVLVVIAV) traverse the membrane as a helical segment. The Cytoplasmic portion of the chain corresponds to 77–88 (LTSRALRAPQNL). A helical membrane pass occupies residues 89 to 114 (FLVSLASADILVATLVMPFSLANELM). Residues 115–124 (AYWYFGQVWC) lie on the Extracellular side of the membrane. An intrachain disulfide couples Cys-124 to Cys-202. Residues 125–147 (GVYLALDVLFCTSSIVHLCAISL) traverse the membrane as a helical segment. Over 148–168 (DRYWSVTQAVEYNLKRTPRRV) the chain is Cytoplasmic. A helical membrane pass occupies residues 169 to 191 (KATIVAVWLISAVISFPPLVSFY). Over 192 to 207 (RRPDGAAYPQCGLNDE) the chain is Extracellular. Residues 208-231 (TWYILSSCIGSFFAPCLIMGLVYA) form a helical membrane-spanning segment. Residues 232–379 (RIYRVAKLRT…QAREKRFTFV (148 aa)) are Cytoplasmic-facing. Residues 245–343 (SEKRGPAGPD…SPGPGGRLSR (99 aa)) are disordered. The span at 291–303 (RRRRRGALRRGGR) shows a compositional bias: basic residues. A helical transmembrane segment spans residues 380–403 (LAVVMGVFVLCWFPFFFSYSLYGI). Residues 404-416 (CREACQLPEPLFK) are Extracellular-facing. Residues 417-437 (FFFWIGYCNSSLNPVIYTVFN) traverse the membrane as a helical segment. Residues 438-458 (QDFRRSFKHILFRRRRRGFRQ) lie on the Cytoplasmic side of the membrane.

Belongs to the G-protein coupled receptor 1 family. Adrenergic receptor subfamily. ADRA2C sub-subfamily.

The protein resides in the cell membrane. Its function is as follows. Alpha-2 adrenergic receptors mediate the catecholamine-induced inhibition of adenylate cyclase through the action of G proteins. The protein is Alpha-2C adrenergic receptor (Adra2c) of Mus musculus (Mouse).